Reading from the N-terminus, the 396-residue chain is UDP-galactose translocator (396 aa).

The next 10 membrane-spanning stretches (helical) occupy residues 3–23 (AVGA…AGAL), 37–57 (YISL…IRYA), 65–85 (FFAT…CLLL), 97–117 (LVLF…KLAV), 140–160 (TFQV…VLML), 169–189 (WASL…QAGG), 200–220 (GAGL…GVYF), 238–258 (LGLF…GTAV), 269–289 (PAVW…AVVV), and 315–335 (LFGF…IGAV). Residues 358–379 (PCVHQQPPGQPPPPQLSSHRGD) are disordered. The ER retention motif motif lies at 392–396 (KVKGS).

The protein belongs to the nucleotide-sugar transporter family. SLC35A subfamily. As to quaternary structure, interacts with SLC35A3; the interaction is reduced in the presence of SLC35A4. Found in a complex with SLC35A3 and SLC35A4. In terms of assembly, interacts with B4GALT4.

It is found in the endoplasmic reticulum membrane. Its subcellular location is the golgi apparatus membrane. It carries out the reaction UMP(out) + UDP-alpha-D-galactose(in) = UMP(in) + UDP-alpha-D-galactose(out). It catalyses the reaction UDP-N-acetyl-alpha-D-galactosamine(in) + UMP(out) = UDP-N-acetyl-alpha-D-galactosamine(out) + UMP(in). The enzyme catalyses UMP(out) + UDP-alpha-D-glucose(in) = UMP(in) + UDP-alpha-D-glucose(out). The catalysed reaction is UMP(out) + UDP-N-acetyl-alpha-D-glucosamine(in) = UMP(in) + UDP-N-acetyl-alpha-D-glucosamine(out). It carries out the reaction UDP-alpha-D-galactose(in) + AMP(out) = UDP-alpha-D-galactose(out) + AMP(in). It catalyses the reaction UDP-alpha-D-galactose(in) + CMP(out) = UDP-alpha-D-galactose(out) + CMP(in). The enzyme catalyses UDP-N-acetyl-alpha-D-galactosamine(out) + UDP-alpha-D-galactose(in) = UDP-N-acetyl-alpha-D-galactosamine(in) + UDP-alpha-D-galactose(out). The catalysed reaction is UDP-N-acetyl-alpha-D-glucosamine(out) + UDP-alpha-D-galactose(in) = UDP-N-acetyl-alpha-D-glucosamine(in) + UDP-alpha-D-galactose(out). It carries out the reaction UDP-alpha-D-galactose(in) + UDP-alpha-D-glucose(out) = UDP-alpha-D-galactose(out) + UDP-alpha-D-glucose(in). It catalyses the reaction UMP(out) + CMP(in) = UMP(in) + CMP(out). The enzyme catalyses UMP(out) + AMP(in) = UMP(in) + AMP(out). Functionally, transports uridine diphosphate galactose (UDP-galactose) from the cytosol into the Golgi apparatus, functioning as an antiporter that exchanges UDP-galactose for UMP. It is also able to exchange UDP-galactose for AMP and CMP, and to transport UDP-N-acetylgalactosamine (UDP-GalNAc) and other nucleotide sugars. As a provider of UDP-galactose to galactosyltransferases present in the Golgi apparatus, it is necessary for globotriaosylceramide/globoside (Gb3Cer) synthesis from lactosylceramide. This is UDP-galactose translocator from Homo sapiens (Human).